We begin with the raw amino-acid sequence, 574 residues long: MIKEAIFHKSDVPYAYPLNENQLKIVLRTAVFDVDRVYVLYKDRYDWLGKFKIKPMVLTHTNELFDYYETTLELNKKFVYFFYLVSDGGEKLYYTEAGFYKKRPENHFWGFFHYPYIGEKDVFFAPEWTSDCMVYQIFPERFNNGDKSNDPENVKPWGEKPTADSFFGGDLQGIIDKIDYLKDLGINAIYLTPIFLSHSTHKYDTTDYYTIDPHFGDTQKARELVQKCHDNGIKVIFDAVFNHCGYDFFAFQDVIKNGKKSKYWDWFNIYEWPIKTHPKPSYEAFADTVWRMPKLMTKNPEVQKYLLEVAEYWIKEVDIDGWRLDVANEIDHHFWRKFREVVKAAKPEAIIVGEVWHDASPWLRGDQFDSVMNYPFRNAVVDFFAKRKISASRFNTMITEQLMRHMDSVNRVMFNLIGSHDTERFLTLANGMVARMKLALVFQFTFVGIPYIYYGDEVGMVGDYDPDCRRCMIWEEEKQNKSIFNFYKKLISIRRENEELKYGSFCTLYAIGRVFAFKREYKGKSIIVVLNNSSKQEVIFLNEVEGKEDILKMKELKRSGNLLYLQPNSAYILK.

6 residues coordinate Ca(2+): Asn-144, Asp-146, Asn-149, Asp-150, Gly-168, and Asp-170. His-243 and Arg-323 together coordinate substrate. Asp-325 functions as the Nucleophile in the catalytic mechanism. Glu-354 functions as the Proton donor in the catalytic mechanism. Substrate contacts are provided by residues 420-421, Asp-465, and Arg-469; that span reads HD.

Belongs to the glycosyl hydrolase 13 family. As to quaternary structure, monomer. It depends on Ca(2+) as a cofactor.

The enzyme catalyses cyclomaltodextrin + H2O = linear maltodextrin. Hydrolyzes cyclodextrins. Can also act on linear maltodextrins, with the exception of maltose. In Thermoanaerobacter pseudethanolicus (strain ATCC 33223 / 39E) (Clostridium thermohydrosulfuricum), this protein is Cyclomaltodextrinase.